The primary structure comprises 281 residues: 2,3,4,5-tetrahydropyridine-2,6-dicarboxylate N-succinyltransferase (281 aa).

2 residues coordinate substrate: R108 and D145.

Belongs to the transferase hexapeptide repeat family. As to quaternary structure, homotrimer.

The protein localises to the cytoplasm. The enzyme catalyses (S)-2,3,4,5-tetrahydrodipicolinate + succinyl-CoA + H2O = (S)-2-succinylamino-6-oxoheptanedioate + CoA. It functions in the pathway amino-acid biosynthesis; L-lysine biosynthesis via DAP pathway; LL-2,6-diaminopimelate from (S)-tetrahydrodipicolinate (succinylase route): step 1/3. The protein is 2,3,4,5-tetrahydropyridine-2,6-dicarboxylate N-succinyltransferase of Nitrobacter hamburgensis (strain DSM 10229 / NCIMB 13809 / X14).